Reading from the N-terminus, the 375-residue chain is Queuine tRNA-ribosyltransferase (375 aa).

Catalysis depends on aspartate 89, which acts as the Proton acceptor. Residues 89–93, aspartate 143, glutamine 187, and glycine 214 contribute to the substrate site; that span reads DSGGF. The tract at residues 245 to 251 is RNA binding; sequence GVGKPED. Aspartate 264 serves as the catalytic Nucleophile. Positions 269-273 are RNA binding; important for wobble base 34 recognition; the sequence is TRNAR. Residues cysteine 302, cysteine 304, cysteine 307, and histidine 333 each coordinate Zn(2+).

This sequence belongs to the queuine tRNA-ribosyltransferase family. In terms of assembly, homodimer. Within each dimer, one monomer is responsible for RNA recognition and catalysis, while the other monomer binds to the replacement base PreQ1. Zn(2+) is required as a cofactor.

It catalyses the reaction 7-aminomethyl-7-carbaguanine + guanosine(34) in tRNA = 7-aminomethyl-7-carbaguanosine(34) in tRNA + guanine. It functions in the pathway tRNA modification; tRNA-queuosine biosynthesis. Its function is as follows. Catalyzes the base-exchange of a guanine (G) residue with the queuine precursor 7-aminomethyl-7-deazaguanine (PreQ1) at position 34 (anticodon wobble position) in tRNAs with GU(N) anticodons (tRNA-Asp, -Asn, -His and -Tyr). Catalysis occurs through a double-displacement mechanism. The nucleophile active site attacks the C1' of nucleotide 34 to detach the guanine base from the RNA, forming a covalent enzyme-RNA intermediate. The proton acceptor active site deprotonates the incoming PreQ1, allowing a nucleophilic attack on the C1' of the ribose to form the product. After dissociation, two additional enzymatic reactions on the tRNA convert PreQ1 to queuine (Q), resulting in the hypermodified nucleoside queuosine (7-(((4,5-cis-dihydroxy-2-cyclopenten-1-yl)amino)methyl)-7-deazaguanosine). In Escherichia coli O81 (strain ED1a), this protein is Queuine tRNA-ribosyltransferase.